The chain runs to 243 residues: MALEPIILIPARMGSTRLPQKALAEISGKPMIVHVAEQAKKAAIGRTIVATDHNDIAKAVAEYGHEYIITRGDHKSGSDRIYEALMRIDPEQRYNAILNIQGDLPTIMPREIIHALRPLENSFTDIATLGSQIIEESEKRDPNVVKIIGTPLSQNRLRALYFTRTTSPYGDGPLYHHIGIYAYRREALEKFVSFKPSTLEIREKLEQLRALEHNMRIDVEIVDTIPLGVDTQRDLERVRKILA.

Belongs to the KdsB family.

The protein resides in the cytoplasm. The enzyme catalyses 3-deoxy-alpha-D-manno-oct-2-ulosonate + CTP = CMP-3-deoxy-beta-D-manno-octulosonate + diphosphate. It participates in nucleotide-sugar biosynthesis; CMP-3-deoxy-D-manno-octulosonate biosynthesis; CMP-3-deoxy-D-manno-octulosonate from 3-deoxy-D-manno-octulosonate and CTP: step 1/1. It functions in the pathway bacterial outer membrane biogenesis; lipopolysaccharide biosynthesis. Activates KDO (a required 8-carbon sugar) for incorporation into bacterial lipopolysaccharide in Gram-negative bacteria. The chain is 3-deoxy-manno-octulosonate cytidylyltransferase from Bartonella tribocorum (strain CIP 105476 / IBS 506).